The sequence spans 337 residues: Phosphate acyltransferase (337 aa).

The protein belongs to the PlsX family. In terms of assembly, homodimer. Probably interacts with PlsY.

The protein resides in the cytoplasm. The enzyme catalyses a fatty acyl-[ACP] + phosphate = an acyl phosphate + holo-[ACP]. It participates in lipid metabolism; phospholipid metabolism. Catalyzes the reversible formation of acyl-phosphate (acyl-PO(4)) from acyl-[acyl-carrier-protein] (acyl-ACP). This enzyme utilizes acyl-ACP as fatty acyl donor, but not acyl-CoA. This chain is Phosphate acyltransferase, found in Halalkalibacterium halodurans (strain ATCC BAA-125 / DSM 18197 / FERM 7344 / JCM 9153 / C-125) (Bacillus halodurans).